The chain runs to 192 residues: Elongation factor P (192 aa).

This sequence belongs to the elongation factor P family.

It localises to the cytoplasm. Its pathway is protein biosynthesis; polypeptide chain elongation. Involved in peptide bond synthesis. Stimulates efficient translation and peptide-bond synthesis on native or reconstituted 70S ribosomes in vitro. Probably functions indirectly by altering the affinity of the ribosome for aminoacyl-tRNA, thus increasing their reactivity as acceptors for peptidyl transferase. The polypeptide is Elongation factor P (efp) (Borreliella burgdorferi (strain ATCC 35210 / DSM 4680 / CIP 102532 / B31) (Borrelia burgdorferi)).